We begin with the raw amino-acid sequence, 441 residues long: Ribosomal protein uS12 methylthiotransferase RimO (441 aa).

The MTTase N-terminal domain occupies 8 to 118; the sequence is PKIGFVSLGC…VLQHVHHYVP (111 aa). The [4Fe-4S] cluster site is built by Cys17, Cys53, Cys82, Cys150, Cys154, and Cys157. In terms of domain architecture, Radical SAM core spans 136-373; sequence LTPRHYAYLK…MQLQQQISAE (238 aa). Residues 376-441 enclose the TRAM domain; it reads QEKVGREILV…DEYDLWGSRV (66 aa).

The protein belongs to the methylthiotransferase family. RimO subfamily. The cofactor is [4Fe-4S] cluster.

Its subcellular location is the cytoplasm. The catalysed reaction is L-aspartate(89)-[ribosomal protein uS12]-hydrogen + (sulfur carrier)-SH + AH2 + 2 S-adenosyl-L-methionine = 3-methylsulfanyl-L-aspartate(89)-[ribosomal protein uS12]-hydrogen + (sulfur carrier)-H + 5'-deoxyadenosine + L-methionine + A + S-adenosyl-L-homocysteine + 2 H(+). Catalyzes the methylthiolation of an aspartic acid residue of ribosomal protein uS12. The protein is Ribosomal protein uS12 methylthiotransferase RimO of Salmonella paratyphi B (strain ATCC BAA-1250 / SPB7).